The chain runs to 1026 residues: Multidrug resistance protein MdtC (1026 aa).

Transmembrane regions (helical) follow at residues 15-35 (ILIAAAITLCGILGFRLLPVA), 333-353 (EVEETLAISVALVILVVFLFL), 360-380 (LIPAVAVPVSLIGTFAAMYLC), 387-407 (LSLMALTIATGFVVDDAIVVL), 431-451 (VGFTVISMSLSLVAVFLPLLL), 463-483 (FAVTLSVAIGISLVVSLTLTP), 528-548 (LVGVVFLGTVALNIWLYIAIP), 853-873 (LILIVAAIATVYIVLGILYES), 897-917 (LFNAPFSLIALIGIMLLIGIV), 953-973 (PIMMTTLAALFGALPLVLSDG), and 984-1004 (ITIVGGLVMSQLLTLYTTPVV).

The protein belongs to the resistance-nodulation-cell division (RND) (TC 2.A.6) family. MdtC subfamily. As to quaternary structure, part of a tripartite efflux system composed of MdtA, MdtB and MdtC. MdtC forms a heteromultimer with MdtB.

The protein localises to the cell inner membrane. In Salmonella heidelberg (strain SL476), this protein is Multidrug resistance protein MdtC.